A 127-amino-acid polypeptide reads, in one-letter code: Pleckstrin homology-like domain family A member 3 (127 aa).

One can recognise a PH domain in the interval 5-108; it reads KVMNDGYLEK…RFKNRVAVQT (104 aa).

The protein belongs to the PHLDA3 family.

It is found in the cytoplasm. Its subcellular location is the membrane. P53/tp53-regulated repressor of Akt/akt1 signaling. Represses akt1 by preventing akt1-binding to membrane lipids, thereby inhibiting akt1 translocation to the cellular membrane and activation. Contributes to p53/tp53-dependent apoptosis by repressing akt1 activity. Its direct transcription regulation by p53/tp53 may explain how p53/tp53 can negatively regulate akt1. May act as a tumor suppressor. The polypeptide is Pleckstrin homology-like domain family A member 3 (phlda3) (Danio rerio (Zebrafish)).